Here is a 102-residue protein sequence, read N- to C-terminus: Protein isd11 (102 aa).

The protein belongs to the complex I LYR family.

It localises to the mitochondrion. Its function is as follows. Required for mitochondrial iron-sulfur (Fe-S) protein biosynthesis. This Schizosaccharomyces pombe (strain 972 / ATCC 24843) (Fission yeast) protein is Protein isd11 (isd11).